The following is a 435-amino-acid chain: Arginine biosynthesis bifunctional protein ArgJ, mitochondrial (435 aa).

Substrate-binding residues include threonine 179, lysine 205, threonine 216, glutamate 302, asparagine 430, and serine 435. Residue threonine 216 is the Nucleophile of the active site.

Belongs to the ArgJ family. Heterodimer of an alpha and a beta chain. Post-translationally, the alpha and beta chains are autoproteolytically processed from a single precursor protein within the mitochondrion.

The protein resides in the mitochondrion matrix. The enzyme catalyses N(2)-acetyl-L-ornithine + L-glutamate = N-acetyl-L-glutamate + L-ornithine. It catalyses the reaction L-glutamate + acetyl-CoA = N-acetyl-L-glutamate + CoA + H(+). It functions in the pathway amino-acid biosynthesis; L-arginine biosynthesis; L-ornithine and N-acetyl-L-glutamate from L-glutamate and N(2)-acetyl-L-ornithine (cyclic): step 1/1. Its pathway is amino-acid biosynthesis; L-arginine biosynthesis; N(2)-acetyl-L-ornithine from L-glutamate: step 1/4. Its function is as follows. Catalyzes two activities which are involved in the cyclic version of arginine biosynthesis: the synthesis of acetylglutamate from glutamate and acetyl-CoA, and of ornithine by transacetylation between acetylornithine and glutamate. The polypeptide is Arginine biosynthesis bifunctional protein ArgJ, mitochondrial (Schizosaccharomyces japonicus (strain yFS275 / FY16936) (Fission yeast)).